We begin with the raw amino-acid sequence, 367 residues long: DNA replication and repair protein RecF (367 aa).

Position 31–38 (31–38 (GENGSGKT)) interacts with ATP.

It belongs to the RecF family.

The protein resides in the cytoplasm. The RecF protein is involved in DNA metabolism; it is required for DNA replication and normal SOS inducibility. RecF binds preferentially to single-stranded, linear DNA. It also seems to bind ATP. The polypeptide is DNA replication and repair protein RecF (Saccharophagus degradans (strain 2-40 / ATCC 43961 / DSM 17024)).